Here is a 224-residue protein sequence, read N- to C-terminus: MTVAVVRFGGSNCDRDAVRALAHLGVDAAVAWHDDGLPADTDGVVVPGGFSYGDYLRAGAMAAQSPVVAEVRALAADGVPVLGVCNGAQIGCEAGLAPGAFTTNASARFQCERVHLRVENATTPWTAAYSEGDVLEIPIAHGEGRFEIDDDAYADLVADDRVLFRYCNADGEVTEAANPNGSTGAVAGVTGDRDHVAVMMPHPERATLPALGATDGQGILGAFA.

The Glutamine amidotransferase type-1 domain occupies 2 to 224 (TVAVVRFGGS…DGQGILGAFA (223 aa)). Cys-85 serves as the catalytic Nucleophile. Residues His-202 and Glu-204 contribute to the active site.

In terms of assembly, part of the FGAM synthase complex composed of 1 PurL, 1 PurQ and 2 PurS subunits.

The protein localises to the cytoplasm. It catalyses the reaction N(2)-formyl-N(1)-(5-phospho-beta-D-ribosyl)glycinamide + L-glutamine + ATP + H2O = 2-formamido-N(1)-(5-O-phospho-beta-D-ribosyl)acetamidine + L-glutamate + ADP + phosphate + H(+). It carries out the reaction L-glutamine + H2O = L-glutamate + NH4(+). Its pathway is purine metabolism; IMP biosynthesis via de novo pathway; 5-amino-1-(5-phospho-D-ribosyl)imidazole from N(2)-formyl-N(1)-(5-phospho-D-ribosyl)glycinamide: step 1/2. In terms of biological role, part of the phosphoribosylformylglycinamidine synthase complex involved in the purines biosynthetic pathway. Catalyzes the ATP-dependent conversion of formylglycinamide ribonucleotide (FGAR) and glutamine to yield formylglycinamidine ribonucleotide (FGAM) and glutamate. The FGAM synthase complex is composed of three subunits. PurQ produces an ammonia molecule by converting glutamine to glutamate. PurL transfers the ammonia molecule to FGAR to form FGAM in an ATP-dependent manner. PurS interacts with PurQ and PurL and is thought to assist in the transfer of the ammonia molecule from PurQ to PurL. The protein is Phosphoribosylformylglycinamidine synthase subunit PurQ of Halobacterium salinarum (strain ATCC 700922 / JCM 11081 / NRC-1) (Halobacterium halobium).